The sequence spans 470 residues: Syncoilin (470 aa).

Positions 1–43 (MASPEPLRGGDGARASREPHTEASFPLQESESPKEAKTFNPEA) are disordered. Residues 1–148 (MASPEPLRGG…TEGSLPAQPI (148 aa)) form a head region. The residue at position 32 (S32) is a Phosphoserine. The IF rod domain occupies 157-452 (SVEDLERLEA…AMLPKSLEQA (296 aa)). The segment at 158 to 192 (VEDLERLEARFQQCVQAVSQLEEERDQLIHELVLL) is coil 1A. Residues 193-219 (REPALQEVQQVHQDILAAYKLHAQAEL) are linker 1. Positions 220 to 297 (ERDGLREEIR…KEQLQQQLEA (78 aa)) are coil 1b. Residues 298–337 (PPTQSDGHFLQESRRLSTQFENLMAESRQGLEEEYEPQLL) are linker 2. S314 carries the post-translational modification Phosphoserine. Residues 338–445 (RLLERKEAGT…EELSTYKAML (108 aa)) are coil 2. Residues 446–470 (PKSLEQADAPTSQAGGVEAQSPGTV) are disordered. The segment at 446-470 (PKSLEQADAPTSQAGGVEAQSPGTV) is tail.

Belongs to the intermediate filament family. As to quaternary structure, may link the dystrophin-associated glycoprotein complex (DAPC) to intracellular desmin (DES) filaments. Interacts with DES and DTNA. As to expression, detected strongly in skeletal muscle and heart and weakly in lung (at protein level). Highly expressed in skeletal muscle and lung and weakly in lung and testis.

The protein localises to the cytoplasm. Its subcellular location is the perinuclear region. Functionally, atypical type III intermediate filament (IF) protein that may play a supportive role in the efficient coupling of mechanical stress between the myofibril and fiber exterior. May facilitate lateral force transmission during skeletal muscle contraction. Does not form homofilaments nor heterofilaments with other IF proteins. The sequence is that of Syncoilin (Sync) from Mus musculus (Mouse).